Reading from the N-terminus, the 189-residue chain is Translation initiation factor IF-3 (189 aa).

The protein belongs to the IF-3 family. Monomer.

The protein localises to the cytoplasm. Functionally, IF-3 binds to the 30S ribosomal subunit and shifts the equilibrium between 70S ribosomes and their 50S and 30S subunits in favor of the free subunits, thus enhancing the availability of 30S subunits on which protein synthesis initiation begins. The chain is Translation initiation factor IF-3 from Corynebacterium glutamicum (strain R).